Consider the following 392-residue polypeptide: Copper-containing nitrite reductase (392 aa).

Positions 1–18 (MKRQALAAMIASLFALAA) are cleaved as a signal peptide. Residue cysteine 19 is the site of N-palmitoyl cysteine attachment. Cysteine 19 carries S-diacylglycerol cysteine lipidation. The interval 30 to 49 (ETPAASAEAASSAAQATAET) is disordered. 2 Plastocyanin-like domains span residues 101–195 (WTFD…ILVE) and 245–346 (GHVG…LKVE). Histidine 134, histidine 139, histidine 174, cysteine 175, histidine 183, and methionine 188 together coordinate Cu cation. Histidine 139 provides a ligand contact to substrate. Histidine 280 serves as a coordination point for substrate. Histidine 329 contacts Cu cation. The segment at 367–392 (GAASAPAASAPAASAPAASASEKSVY) is disordered. Repeat copies occupy residues 368 to 372 (AASAP), 373 to 377 (AASAP), 378 to 382 (AASAP), and 383 to 387 (AASAS). Residues 368 to 387 (AASAPAASAPAASAPAASAS) form a 4 X 5 AA tandem repeats of A-A-S-A-P region.

The protein belongs to the multicopper oxidase family. As to quaternary structure, homotrimer. Cu(+) serves as cofactor. The cofactor is Cu(2+). In terms of processing, palmitoylated.

It is found in the cell outer membrane. The catalysed reaction is nitric oxide + Fe(III)-[cytochrome c] + H2O = Fe(II)-[cytochrome c] + nitrite + 2 H(+). In terms of biological role, catalyzes the reduction of nitrite to nitric oxide (NO), probably with azurin as electron donor. Essential for growth and survival in oxygen-depleted environments. Can also provide protection against killing by normal human sera. The sequence is that of Copper-containing nitrite reductase (aniA) from Neisseria gonorrhoeae.